The chain runs to 384 residues: MGKRDYYEILGVTRQASEEEIKKAYRKLALKYHPDRNPGDKDSEELFKEAAEAYEVLHDAQKKRIYDTYGHEGLRGTGFSGFRGFEDIFSSFGDVFQEFFNFGFGAGGQSRTAARPGDDLLYDLSLTFEEAVFGTEKEIRLQTLTTCEECNGSGAEPGTRETVCPVCQGSGQVVQSQGFFRISATCTRCQGMGKVLVSPCKTCNGQGRTRQSKTVQVRVPAGVDTGTRLRLRGEGESGYRGGVAGDLYVRLHVNPHEFFERDGDNLYCKVSVSFAQAILGDQIEIPTLDGGRELKIQPGTQPGAVIRFSGEGVPRLRGYGRGDLFIEVEVKIPTRITPRQEEIVTEFMQIEKEKSGEKVRKWPWSKRKDREKKSMAESTREART.

Residues 5–70 (DYYEILGVTR…QKKRIYDTYG (66 aa)) form the J domain. A CR-type zinc finger spans residues 134 to 212 (GTEKEIRLQT…CNGQGRTRQS (79 aa)). Cys-147, Cys-150, Cys-164, Cys-167, Cys-186, Cys-189, Cys-200, and Cys-203 together coordinate Zn(2+). CXXCXGXG motif repeat units follow at residues 147-154 (CEECNGSG), 164-171 (CPVCQGSG), 186-193 (CTRCQGMG), and 200-207 (CKTCNGQG). Residues 352-384 (KEKSGEKVRKWPWSKRKDREKKSMAESTREART) form a disordered region.

Belongs to the DnaJ family. In terms of assembly, homodimer. Zn(2+) is required as a cofactor.

It is found in the cytoplasm. Participates actively in the response to hyperosmotic and heat shock by preventing the aggregation of stress-denatured proteins and by disaggregating proteins, also in an autonomous, DnaK-independent fashion. Unfolded proteins bind initially to DnaJ; upon interaction with the DnaJ-bound protein, DnaK hydrolyzes its bound ATP, resulting in the formation of a stable complex. GrpE releases ADP from DnaK; ATP binding to DnaK triggers the release of the substrate protein, thus completing the reaction cycle. Several rounds of ATP-dependent interactions between DnaJ, DnaK and GrpE are required for fully efficient folding. Also involved, together with DnaK and GrpE, in the DNA replication of plasmids through activation of initiation proteins. The protein is Chaperone protein DnaJ of Syntrophobacter fumaroxidans (strain DSM 10017 / MPOB).